A 720-amino-acid chain; its full sequence is Putative glutamine--fructose-6-phosphate aminotransferase [isomerizing] (720 aa).

The active-site Nucleophile; for GATase activity is Cys2. The region spanning 2 to 321 (CGIFGYCNFL…DNDTAHIYDG (320 aa)) is the Glutamine amidotransferase type-2 domain. Over residues 266–280 (STTSTFNHGSSTETP) the composition is skewed to polar residues. A disordered region spans residues 266–285 (STTSTFNHGSSTETPAENGL). SIS domains lie at 393 to 532 (WLTE…DLVS) and 565 to 710 (CDKK…VDLP).

It catalyses the reaction D-fructose 6-phosphate + L-glutamine = D-glucosamine 6-phosphate + L-glutamate. Its pathway is nucleotide-sugar biosynthesis; UDP-N-acetyl-alpha-D-glucosamine biosynthesis; alpha-D-glucosamine 6-phosphate from D-fructose 6-phosphate: step 1/1. In terms of biological role, involved in amino sugar synthesis (formation of chitin, supplies the amino sugars of asparagine-linked oligosaccharides of glycoproteins). The sequence is that of Putative glutamine--fructose-6-phosphate aminotransferase [isomerizing] from Saccharomyces cerevisiae (strain JAY291) (Baker's yeast).